The chain runs to 183 residues: MSSHSQEPVGEENFDDSEYDRPNKSQVKREMHALLDLGKELVELSPERLRQLPLEERLYEAIREAQRTTGREGRRRQIHFVGKLMRSAPAEAIRAQLDTWRNGSREETAAMHRLEALRERLLTDDDALTAVLQRNPDADIQHLRALIRAARKEAAANAALSQGQEPQRKQYRALFQALKNLSA.

Residues 1 to 27 (MSSHSQEPVGEENFDDSEYDRPNKSQV) form a disordered region. A compositionally biased stretch (acidic residues) spans 9-18 (VGEENFDDSE).

It belongs to the DarP family.

The protein resides in the cytoplasm. Member of a network of 50S ribosomal subunit biogenesis factors which assembles along the 30S-50S interface, preventing incorrect 23S rRNA structures from forming. Promotes peptidyl transferase center (PTC) maturation. The sequence is that of Dual-action ribosomal maturation protein DarP from Bordetella pertussis (strain Tohama I / ATCC BAA-589 / NCTC 13251).